The primary structure comprises 264 residues: Protein OXIDATIVE STRESS 3 LIKE 1 (264 aa).

Disordered regions lie at residues 1-76 (MDCV…GPLE) and 178-225 (TGEG…QGSF). The span at 29–43 (PSDSSSSPSSSASSS) shows a compositional bias: low complexity. Residues 47 to 56 (NSDDGEKSSE) show a composition bias toward basic and acidic residues. Residues 57–67 (DGGDDAGENEV) are compositionally biased toward acidic residues. The segment covering 179 to 201 (GEGSSSGGDSSPGSSPTTSGSPP) has biased composition (low complexity). Residues 203–212 (QLHHHQHQMK) are compositionally biased toward basic residues.

Its subcellular location is the nucleus. Promotes slightly the tolerance to zinc (Zn) and to oxidizing chemicals (e.g. diamide). This Arabidopsis thaliana (Mouse-ear cress) protein is Protein OXIDATIVE STRESS 3 LIKE 1.